A 36-amino-acid chain; its full sequence is Pancreatic polypeptide (36 aa).

Tyr36 bears the Tyrosine amide mark.

Belongs to the NPY family.

It localises to the secreted. In terms of biological role, hormone secreted by pancreatic cells that acts as a regulator of pancreatic and gastrointestinal functions probably by signaling through the G protein-coupled receptor NPY4R2. The sequence is that of Pancreatic polypeptide (PPY) from Oryctolagus cuniculus (Rabbit).